A 563-amino-acid polypeptide reads, in one-letter code: Putative solute carrier family 26 member 10P (563 aa).

A run of 5 helical transmembrane segments spans residues 45-65, 75-91, 116-136, 152-172, and 352-372; these read ALLA…PVLI, LSTG…GSAV, VGVA…MFVL, ALTS…LLGL, and LAGL…GPFF. An STAS domain is found at 406–541; it reads RVDFLLQVPG…VSVQDAAAYA (136 aa).

It belongs to the SLC26A/SulP transporter (TC 2.A.53) family.

The protein resides in the membrane. Chloride/bicarbonate exchanger. This chain is Putative solute carrier family 26 member 10P (SLC26A10P), found in Homo sapiens (Human).